The primary structure comprises 197 residues: Xanthine phosphoribosyltransferase (197 aa).

2 residues coordinate xanthine: Leu20 and Asn27. 128-132 (ANGQA) contributes to the 5-phospho-alpha-D-ribose 1-diphosphate binding site. A xanthine-binding site is contributed by Lys156.

Belongs to the purine/pyrimidine phosphoribosyltransferase family. Xpt subfamily. Homodimer.

The protein resides in the cytoplasm. It catalyses the reaction XMP + diphosphate = xanthine + 5-phospho-alpha-D-ribose 1-diphosphate. Its pathway is purine metabolism; XMP biosynthesis via salvage pathway; XMP from xanthine: step 1/1. Its function is as follows. Converts the preformed base xanthine, a product of nucleic acid breakdown, to xanthosine 5'-monophosphate (XMP), so it can be reused for RNA or DNA synthesis. In Bacillus cereus (strain ATCC 14579 / DSM 31 / CCUG 7414 / JCM 2152 / NBRC 15305 / NCIMB 9373 / NCTC 2599 / NRRL B-3711), this protein is Xanthine phosphoribosyltransferase.